The chain runs to 271 residues: MAGLEVLFASAAPAITCTQDALVCFLHWEVVTHGYYALGVGDQPGPNDKKSELLPAGWNNNKDLYVLRYEYKDGSRKLLVKAITVESSMILNVLEYGSQQVADLTLNLDDYIDAEHLGDFHRTYKNSEELRSRIVSGIITPIHEQWEKANVSSPHREFPPATAREVDPLRIPPHHPHTSRQPPWCDPLGPFAVGGEDLDPFGHRRGGMIVDPLRSGFPRALIDPSSGLPNRLPPGAVPPGARFDPFGPIGTSPPGPNPDHLPPPGYDDMYL.

An N-acetylalanine modification is found at alanine 2. The tract at residues 2–150 (AGLEVLFASA…PIHEQWEKAN (149 aa)) is important for homodimerization and interaction with FBXO7. Phosphoserine is present on serine 153. The residue at position 205 (arginine 205) is an Omega-N-methylarginine. Arginine 219 bears the Asymmetric dimethylarginine mark. Positions 222 to 271 (IDPSSGLPNRLPPGAVPPGARFDPFGPIGTSPPGPNPDHLPPPGYDDMYL) are disordered. Arginine 231 is modified (omega-N-methylarginine). A compositionally biased stretch (pro residues) spans 251-265 (TSPPGPNPDHLPPPG). Serine 252 carries the phosphoserine modification.

It belongs to the proteasome inhibitor PI31 family. As to quaternary structure, monomer and homodimer. Interacts with FBXO7.

It is found in the cytoplasm. The protein localises to the endoplasmic reticulum. Functionally, plays an important role in control of proteasome function. Inhibits the hydrolysis of protein and peptide substrates by the 20S proteasome. Also inhibits the activation of the proteasome by the proteasome regulatory proteins PA700 and PA28. This Pongo abelii (Sumatran orangutan) protein is Proteasome inhibitor PI31 subunit (PSMF1).